Here is a 194-residue protein sequence, read N- to C-terminus: Molybdenum cofactor guanylyltransferase (194 aa).

GTP-binding positions include 12–14 (LAG), Lys25, Asp71, and Asp101. Asp101 is a Mg(2+) binding site.

It belongs to the MobA family. In terms of assembly, monomer. Mg(2+) serves as cofactor.

It is found in the cytoplasm. It carries out the reaction Mo-molybdopterin + GTP + H(+) = Mo-molybdopterin guanine dinucleotide + diphosphate. Transfers a GMP moiety from GTP to Mo-molybdopterin (Mo-MPT) cofactor (Moco or molybdenum cofactor) to form Mo-molybdopterin guanine dinucleotide (Mo-MGD) cofactor. The protein is Molybdenum cofactor guanylyltransferase of Salmonella typhimurium (strain LT2 / SGSC1412 / ATCC 700720).